We begin with the raw amino-acid sequence, 140 residues long: Putative pre-16S rRNA nuclease (140 aa).

It belongs to the YqgF nuclease family.

It is found in the cytoplasm. Functionally, could be a nuclease involved in processing of the 5'-end of pre-16S rRNA. The protein is Putative pre-16S rRNA nuclease of Edwardsiella ictaluri (strain 93-146).